The primary structure comprises 180 residues: NADH-quinone oxidoreductase subunit I (180 aa).

2 4Fe-4S ferredoxin-type domains span residues 50–80 (LTRD…LQKA) and 90–119 (EFFR…LTPD). Cys-60, Cys-63, Cys-66, Cys-70, Cys-99, Cys-102, Cys-105, and Cys-109 together coordinate [4Fe-4S] cluster.

It belongs to the complex I 23 kDa subunit family. As to quaternary structure, NDH-1 is composed of 14 different subunits. Subunits NuoA, H, J, K, L, M, N constitute the membrane sector of the complex. [4Fe-4S] cluster is required as a cofactor.

It is found in the cell inner membrane. It catalyses the reaction a quinone + NADH + 5 H(+)(in) = a quinol + NAD(+) + 4 H(+)(out). NDH-1 shuttles electrons from NADH, via FMN and iron-sulfur (Fe-S) centers, to quinones in the respiratory chain. The immediate electron acceptor for the enzyme in this species is believed to be ubiquinone. Couples the redox reaction to proton translocation (for every two electrons transferred, four hydrogen ions are translocated across the cytoplasmic membrane), and thus conserves the redox energy in a proton gradient. This Acinetobacter baumannii (strain ACICU) protein is NADH-quinone oxidoreductase subunit I.